Consider the following 193-residue polypeptide: MPGATAVGITYAGGVILASEKRIAYGNFLVSKNTRKTFQITPYVGAACAGLVADMQILSLQISALAKIRKMDLKRDIPPNSVAKMMSNMMYERRFFPLLTQVIVGGVVGEPAIYTLDSLGSVLPDEYAAVGTGAEMALGVLDPQFKSGMSEKDAVDLAVRGIRSAALRDSFSGDGLDILALDANGAREIAQAA.

Residues 1–4 constitute a propeptide, removed in mature form; by autocatalysis; it reads MPGA. The active-site Nucleophile is the threonine 5.

It belongs to the peptidase T1B family. As to quaternary structure, the 20S proteasome core is composed of 14 alpha and 14 beta subunits that assemble into four stacked heptameric rings, resulting in a barrel-shaped structure. The two inner rings, each composed of seven catalytic beta subunits, are sandwiched by two outer rings, each composed of seven alpha subunits. The catalytic chamber with the active sites is on the inside of the barrel. Has a gated structure, the ends of the cylinder being occluded by the N-termini of the alpha-subunits. Is capped at one or both ends by the proteasome regulatory ATPase, PAN.

It is found in the cytoplasm. It carries out the reaction Cleavage of peptide bonds with very broad specificity.. Its activity is regulated as follows. The formation of the proteasomal ATPase PAN-20S proteasome complex, via the docking of the C-termini of PAN into the intersubunit pockets in the alpha-rings, triggers opening of the gate for substrate entry. Interconversion between the open-gate and close-gate conformations leads to a dynamic regulation of the 20S proteasome proteolysis activity. Component of the proteasome core, a large protease complex with broad specificity involved in protein degradation. The chain is Proteasome subunit beta 1 from Cenarchaeum symbiosum (strain A).